A 521-amino-acid chain; its full sequence is Bifunctional purine biosynthesis protein PurH (521 aa).

In terms of domain architecture, MGS-like spans 1–145; sequence MIKQALISVS…KNHRDVTVVV (145 aa).

Belongs to the PurH family.

It carries out the reaction (6R)-10-formyltetrahydrofolate + 5-amino-1-(5-phospho-beta-D-ribosyl)imidazole-4-carboxamide = 5-formamido-1-(5-phospho-D-ribosyl)imidazole-4-carboxamide + (6S)-5,6,7,8-tetrahydrofolate. The catalysed reaction is IMP + H2O = 5-formamido-1-(5-phospho-D-ribosyl)imidazole-4-carboxamide. The protein operates within purine metabolism; IMP biosynthesis via de novo pathway; 5-formamido-1-(5-phospho-D-ribosyl)imidazole-4-carboxamide from 5-amino-1-(5-phospho-D-ribosyl)imidazole-4-carboxamide (10-formyl THF route): step 1/1. Its pathway is purine metabolism; IMP biosynthesis via de novo pathway; IMP from 5-formamido-1-(5-phospho-D-ribosyl)imidazole-4-carboxamide: step 1/1. This is Bifunctional purine biosynthesis protein PurH from Paraburkholderia phymatum (strain DSM 17167 / CIP 108236 / LMG 21445 / STM815) (Burkholderia phymatum).